Here is a 1032-residue protein sequence, read N- to C-terminus: Leucine-rich repeat and coiled-coil domain-containing protein 1 (1032 aa).

LRR repeat units lie at residues 44 to 65 (TLHA…DHIW), 66 to 87 (NLQH…NTLT), 88 to 109 (KLCT…EELI), 110 to 131 (NLTR…IPLH), and 136 to 157 (KLRY…LQCM). The region spanning 175 to 218 (NPVCRLPGYRAVILQTLPQLRILDCKNIFGEPVNLTEINSSQLQ) is the LRRCT domain. Positions 316-345 (DNVLEKDPRPKRDTDITSESDYGNRKECNR) are disordered. The span at 318 to 330 (VLEKDPRPKRDTD) shows a compositional bias: basic and acidic residues. A coiled-coil region spans residues 421–647 (NTYQSLVEQL…DLENEFRIAL (227 aa)).

Belongs to the LRRCC1 family.

It localises to the cytoplasm. Its subcellular location is the cytoskeleton. The protein resides in the microtubule organizing center. It is found in the centrosome. The protein localises to the centriole. Its function is as follows. Required for the organization of the mitotic spindle. Maintains the structural integrity of centrosomes during mitosis. The chain is Leucine-rich repeat and coiled-coil domain-containing protein 1 (LRRCC1) from Homo sapiens (Human).